The following is a 283-amino-acid chain: Polyamine aminopropyltransferase (283 aa).

A PABS domain is found at 2–237; sequence ELWYTEEHTD…GHWLFGFASK (236 aa). Gln31 serves as a coordination point for S-methyl-5'-thioadenosine. Spermidine-binding residues include His62 and Asp86. Residues Glu106 and 137–138 each bind S-methyl-5'-thioadenosine; that span reads DG. Catalysis depends on Asp155, which acts as the Proton acceptor. Position 155–158 (155–158) interacts with spermidine; it reads DSTD. Pro162 serves as a coordination point for S-methyl-5'-thioadenosine.

This sequence belongs to the spermidine/spermine synthase family. Homodimer or homotetramer.

Its subcellular location is the cytoplasm. It carries out the reaction S-adenosyl 3-(methylsulfanyl)propylamine + putrescine = S-methyl-5'-thioadenosine + spermidine + H(+). The protein operates within amine and polyamine biosynthesis; spermidine biosynthesis; spermidine from putrescine: step 1/1. Its function is as follows. Catalyzes the irreversible transfer of a propylamine group from the amino donor S-adenosylmethioninamine (decarboxy-AdoMet) to putrescine (1,4-diaminobutane) to yield spermidine. The polypeptide is Polyamine aminopropyltransferase (Clostridium perfringens (strain 13 / Type A)).